The sequence spans 452 residues: Cell division protein FtsZ (452 aa).

GTP contacts are provided by residues G24–N28, G111–G113, E142, R146, and D190.

Belongs to the FtsZ family. As to quaternary structure, homodimer. Polymerizes to form a dynamic ring structure in a strictly GTP-dependent manner. Interacts directly with several other division proteins.

It localises to the cytoplasm. Its function is as follows. Essential cell division protein that forms a contractile ring structure (Z ring) at the future cell division site. The regulation of the ring assembly controls the timing and the location of cell division. One of the functions of the FtsZ ring is to recruit other cell division proteins to the septum to produce a new cell wall between the dividing cells. Binds GTP and shows GTPase activity. The polypeptide is Cell division protein FtsZ (Rickettsia typhi (strain ATCC VR-144 / Wilmington)).